The following is a 566-amino-acid chain: Transcription factor opdL (566 aa).

Residues 15–45 (CATCARAKCRCVPRNGGRGRCERCHHLNKEC) constitute a DNA-binding region (zn(2)-C6 fungal-type).

Its subcellular location is the nucleus. Its function is as follows. Transcription factor; part of the gene cluster that mediates the biosynthesis of oxopyrrolidines, polyketide-amino acid hybrid compounds with feature structures of tetramic acid. This is Transcription factor opdL from Penicillium oxalicum (strain 114-2 / CGMCC 5302) (Penicillium decumbens).